Here is a 526-residue protein sequence, read N- to C-terminus: Lysine--tRNA ligase (526 aa).

Glu-431 and Glu-438 together coordinate Mg(2+).

The protein belongs to the class-II aminoacyl-tRNA synthetase family. In terms of assembly, homodimer. Mg(2+) serves as cofactor.

The protein localises to the cytoplasm. The enzyme catalyses tRNA(Lys) + L-lysine + ATP = L-lysyl-tRNA(Lys) + AMP + diphosphate. This chain is Lysine--tRNA ligase, found in Chlamydia felis (strain Fe/C-56) (Chlamydophila felis).